Here is a 190-residue protein sequence, read N- to C-terminus: Xanthine phosphoribosyltransferase (190 aa).

Xanthine is bound by residues Leu20 and Asn27. Residue 128–132 (ANGEA) participates in 5-phospho-alpha-D-ribose 1-diphosphate binding. Lys156 is a binding site for xanthine.

This sequence belongs to the purine/pyrimidine phosphoribosyltransferase family. Xpt subfamily. As to quaternary structure, homodimer.

The protein localises to the cytoplasm. The catalysed reaction is XMP + diphosphate = xanthine + 5-phospho-alpha-D-ribose 1-diphosphate. Its pathway is purine metabolism; XMP biosynthesis via salvage pathway; XMP from xanthine: step 1/1. Its function is as follows. Converts the preformed base xanthine, a product of nucleic acid breakdown, to xanthosine 5'-monophosphate (XMP), so it can be reused for RNA or DNA synthesis. This is Xanthine phosphoribosyltransferase from Clostridium botulinum (strain Eklund 17B / Type B).